The following is a 354-amino-acid chain: MKFGNICFSYQPPGETHKLSNGSLCSAWYRLRRVGFDTYWTLEHHFTEFGLTGNLFVAAANLLGRTKTLNVGTMGVVIPTAHPVRQLEDVLLLDQMSKGRFNFGTVRGLYHKDFRVFGVDMEESRAITQNFYQMIMESLQTGTISSDSDYIQFPKVDVYPKVYSKNVPTCMTAESASTTEWLAIQGLPMVLSWIIGTNEKKAQMELYNEIATEYGHDISKIDHCMTYICSVDDDAQKAQDVCREFLKNWYDSYVNATNIFNDSNQTRGYDYHKGQWRDFVLQGHTNTNRRVDYSNGINPVGTPEQCIEIIQRDIDATGITNITCGFEANGTEDEIIASMRRFMTQVAPFLKEPK.

Belongs to the bacterial luciferase oxidoreductase family. In terms of assembly, heterodimer of an alpha and a beta chain.

The catalysed reaction is a long-chain fatty aldehyde + FMNH2 + O2 = a long-chain fatty acid + hnu + FMN + H2O + 2 H(+). In terms of biological role, light-emitting reaction in luminous bacteria. In Aliivibrio fischeri (Vibrio fischeri), this protein is Alkanal monooxygenase alpha chain (luxA).